Reading from the N-terminus, the 427-residue chain is Trigger factor (427 aa).

The PPIase FKBP-type domain occupies 163–248 (GDTVVIDFEG…VHEVKAKELP (86 aa)).

Belongs to the FKBP-type PPIase family. Tig subfamily.

The protein localises to the cytoplasm. The enzyme catalyses [protein]-peptidylproline (omega=180) = [protein]-peptidylproline (omega=0). In terms of biological role, involved in protein export. Acts as a chaperone by maintaining the newly synthesized protein in an open conformation. Functions as a peptidyl-prolyl cis-trans isomerase. The polypeptide is Trigger factor (Enterococcus faecalis (strain ATCC 700802 / V583)).